The following is a 421-amino-acid chain: Monopolin complex subunit mde4 (421 aa).

2 disordered regions span residues 122 to 158 and 224 to 316; these read QKSNPEKHEDAVSQNRLRGSLDTVSSPSKTHKANKDE and DRKL…MTVS. Over residues 133-149 the composition is skewed to polar residues; that stretch reads VSQNRLRGSLDTVSSPS. The segment covering 224-238 has biased composition (basic and acidic residues); it reads DRKLRMQKKSTERKS. Over residues 262–287 the composition is skewed to polar residues; the sequence is RQPNATSGSPLSVTPFLQKTSTSIGL. Positions 288–304 are enriched in low complexity; the sequence is SSSPPQSSPSAQSSQPF.

Component of a monopolin-like complex composed of pcs1 and mde4. The complex associates with the kinetochore.

The protein localises to the nucleus. It is found in the chromosome. The protein resides in the centromere. Functionally, the monopolin-like pcs1/mde4 complex is essential for accurate chromosome segregation during mitosis and meiosis II. May clamp together microtubule binding sites on the same kinetochore, preventing merotelic attachment of microtubules. The protein is Monopolin complex subunit mde4 (mde4) of Schizosaccharomyces pombe (strain 972 / ATCC 24843) (Fission yeast).